A 61-amino-acid polypeptide reads, in one-letter code: Small ribosomal subunit protein uS14 (61 aa).

The Zn(2+) site is built by Cys24, Cys27, Cys40, and Cys43.

The protein belongs to the universal ribosomal protein uS14 family. Zinc-binding uS14 subfamily. As to quaternary structure, part of the 30S ribosomal subunit. Contacts proteins S3 and S10. Zn(2+) is required as a cofactor.

Binds 16S rRNA, required for the assembly of 30S particles and may also be responsible for determining the conformation of the 16S rRNA at the A site. The sequence is that of Small ribosomal subunit protein uS14 from Syntrophus aciditrophicus (strain SB).